The primary structure comprises 865 residues: Xylosyltransferase 2 (865 aa).

At 1-15 (MVASARVQKLVRRYK) the chain is on the cytoplasmic side. A helical; Signal-anchor for type II membrane protein transmembrane segment spans residues 16 to 36 (LAIATALAILLLQGLVVWSFS). Residues 37–865 (GLEEDEPGEK…GPVKADGRLR (829 aa)) are Lumenal-facing. The disordered stretch occupies residues 39–155 (EEDEPGEKGR…SVEGAPQPTD (117 aa)). The span at 53-65 (RPLDPGEGSKDTD) shows a compositional bias: basic and acidic residues. A compositionally biased stretch (basic residues) spans 73–82 (SAGRRHGRWR). An N-linked (GlcNAc...) asparagine glycan is attached at Asn-122. 4 disulfides stabilise this stretch: Cys-162-Cys-190, Cys-206-Cys-448, Cys-467-Cys-480, and Cys-469-Cys-478. Residues Val-239, Asp-267, and 296–298 (TIW) each bind UDP-alpha-D-xylose. Asn-327 carries N-linked (GlcNAc...) asparagine glycosylation. 400 to 401 (DW) contributes to the UDP-alpha-D-xylose binding site. Residues Ser-481 and 504–505 (RK) contribute to the UDP-alpha-D-xylose site. Intrachain disulfides connect Cys-581-Cys-833 and Cys-826-Cys-839. Asn-683 is a glycosylation site (N-linked (GlcNAc...) asparagine).

Belongs to the glycosyltransferase 14 family. XylT subfamily. As to quaternary structure, monomer. Requires Mg(2+) as cofactor. Mn(2+) is required as a cofactor. Contains disulfide bonds. In terms of tissue distribution, detected in brain, liver, lung, kidney, heart, spleen and testis, and at lower levels in skeletal muscle.

The protein localises to the golgi apparatus membrane. The protein resides in the secreted. It carries out the reaction UDP-alpha-D-xylose + L-seryl-[protein] = 3-O-(beta-D-xylosyl)-L-seryl-[protein] + UDP + H(+). Its pathway is glycan metabolism; chondroitin sulfate biosynthesis. It functions in the pathway glycan metabolism; heparan sulfate biosynthesis. Functionally, catalyzes the first step in the biosynthesis of chondroitin sulfate, heparan sulfate and dermatan sulfate proteoglycans, such as DCN. Transfers D-xylose from UDP-D-xylose to specific serine residues of the core protein. In Mus musculus (Mouse), this protein is Xylosyltransferase 2 (Xylt2).